Here is a 586-residue protein sequence, read N- to C-terminus: Transmembrane protease serine 13 (586 aa).

2 disordered regions span residues 1–115 (MERD…VTTS) and 131–157 (PIRS…LPKF). Topologically, residues 1 to 165 (MERDSHGNAS…KFTWREGQKQ (165 aa)) are cytoplasmic. The 1-1 repeat unit spans residues 9-13 (ASPAR). The segment at 9-93 (ASPARTPSAG…ASPARASPAL (85 aa)) is 13 X 5 AA repeats of A-S-P-A-[GLQR]. The stretch at 14–18 (TPSAG) is one 2-1; approximate repeat. The segment covering 14–52 (TPSAGASPAQASPAGTPPGRASPAQASPAQASPAGTPPG) has biased composition (low complexity). Residues 14–68 (TPSAGASPAQASPAGTPPGRASPAQASPAQASPAGTPPGRASPAQASPAGTPPGR) form a 4 X 5 AA repeats of T-P-P-G-R region. A run of 10 repeats spans residues 19–23 (ASPAQ), 24–28 (ASPAG), 29–33 (TPPGR), 34–38 (ASPAQ), 39–43 (ASPAQ), 44–48 (ASPAG), 49–53 (TPPGR), 54–58 (ASPAQ), 59–63 (ASPAG), and 64–68 (TPPGR). The stretch at 69–78 (ASPGRASPAQ) is one 1-9; approximate repeat. 2 stretches are compositionally biased toward low complexity: residues 69–111 (ASPG…RSAS) and 133–144 (RSSPARSAPATR). 3 consecutive repeat copies span residues 79–83 (ASPAQ), 84–88 (ASPAR), and 89–93 (ASPAL). Residues 166–186 (LPLIGCVLLLIALVVSLIILF) form a helical; Signal-anchor for type II membrane protein membrane-spanning segment. The Extracellular portion of the chain corresponds to 187–586 (QFWQGHTGIR…GGDPGGAPRL (400 aa)). Positions 195–325 (IRYKEQRESC…HCGLRAMTGR (131 aa)) constitute an SRCR domain. In terms of domain architecture, LDL-receptor class A spans 204-226 (CPKHAVRCDGVVDCKLKSDELGC). Disulfide bonds link C250-C314, C263-C317, and C351-C367. 2 N-linked (GlcNAc...) asparagine glycosylation sites follow: N255 and N292. A Peptidase S1 domain is found at 326–559 (IVGGALASDS…VLPWIYSKME (234 aa)). Catalysis depends on H366, which acts as the Charge relay system. A glycan (N-linked (GlcNAc...) asparagine) is linked at N405. The active-site Charge relay system is D414. N-linked (GlcNAc...) asparagine glycosylation is present at N445. 3 cysteine pairs are disulfide-bonded: C448/C517, C480/C496, and C507/C535. S511 acts as the Charge relay system in catalysis. Polar residues predominate over residues 565–574 (QDTAPSRLGT). The segment at 565–586 (QDTAPSRLGTSSGGDPGGAPRL) is disordered. Positions 575–586 (SSGGDPGGAPRL) are enriched in gly residues.

Belongs to the peptidase S1 family. In terms of assembly, interacts with SPINT1/HAI-1; the interaction promotes the phosphorylation and cell membrane localization of TMPRSS13. Interacts with SPINT2/HAI-2; the interaction promotes the phosphorylation and cell membrane localization of TMPRSS13. The inactive zymogen is post-translationally modified and then trafficked to the cell surface, whereby it undergoes autocatalytic cleavage resulting in an activated form that is released extracellularly. In terms of processing, phosphorylation is required for localization at the cell surface. Phosphorylation increases following inhibition of protease activity by SPINT2/HAI-2. Post-translationally, N-glycosylation of Asn-405 and Asn-445 is required for exit from the endoplasmic reticulum and trafficking to the cell surface. Also required for autocleavage of the zymogen, activation and secretion of the mature protein. Expressed in placenta. As to expression, predominantly expressed in lung, placenta, pancreas, and prostate. In terms of tissue distribution, expressed in lung, placenta, pancreas, and prostate. Weakly expressed in testis and peripheral blood lymphocytes.

It localises to the cell membrane. It is found in the secreted. The protein localises to the cytoplasm. Its activity is regulated as follows. Cleavage of HGF is inhibited by SPINT1/HAI-1 via the BPTI/Kunitz inhibitor 1 domain. In terms of biological role, serine protease. Cleaves the proform of PRSS8/prostasin to form the active protein. Cleaves the proform of HGF to form the active protein which promotes MAPK signaling. Promotes the formation of the stratum corneum and subsequently the epidermal barrier in embryos. This Homo sapiens (Human) protein is Transmembrane protease serine 13 (TMPRSS13).